A 20-amino-acid chain; its full sequence is Trypsin inhibitor DE-3 (20 aa).

The protein belongs to the protease inhibitor I3 (leguminous Kunitz-type inhibitor) family.

Functionally, inhibition of trypsin. This is Trypsin inhibitor DE-3 from Erythrina corallodendron (Coral tree).